Here is a 526-residue protein sequence, read N- to C-terminus: Peptide chain release factor 3 (526 aa).

A tr-type G domain is found at Asn8–Gln277. Residues Ser17 to Thr24, Asp85 to His89, and Asn139 to Asp142 contribute to the GTP site.

This sequence belongs to the TRAFAC class translation factor GTPase superfamily. Classic translation factor GTPase family. PrfC subfamily.

It is found in the cytoplasm. Its function is as follows. Increases the formation of ribosomal termination complexes and stimulates activities of RF-1 and RF-2. It binds guanine nucleotides and has strong preference for UGA stop codons. It may interact directly with the ribosome. The stimulation of RF-1 and RF-2 is significantly reduced by GTP and GDP, but not by GMP. The chain is Peptide chain release factor 3 from Histophilus somni (strain 129Pt) (Haemophilus somnus).